The primary structure comprises 386 residues: Dual-specificity RNA methyltransferase RlmN (386 aa).

The active-site Proton acceptor is the Glu96. In terms of domain architecture, Radical SAM core spans 102 to 340 (ENDRATLCVS…VITRRTRGED (239 aa)). A disulfide bridge connects residues Cys109 and Cys345. The [4Fe-4S] cluster site is built by Cys116, Cys120, and Cys123. S-adenosyl-L-methionine contacts are provided by residues 170 to 171 (GE), Ser202, 224 to 226 (SIH), and Asn302. Cys345 functions as the S-methylcysteine intermediate in the catalytic mechanism.

Belongs to the radical SAM superfamily. RlmN family. The cofactor is [4Fe-4S] cluster.

It is found in the cytoplasm. It catalyses the reaction adenosine(2503) in 23S rRNA + 2 reduced [2Fe-2S]-[ferredoxin] + 2 S-adenosyl-L-methionine = 2-methyladenosine(2503) in 23S rRNA + 5'-deoxyadenosine + L-methionine + 2 oxidized [2Fe-2S]-[ferredoxin] + S-adenosyl-L-homocysteine. The catalysed reaction is adenosine(37) in tRNA + 2 reduced [2Fe-2S]-[ferredoxin] + 2 S-adenosyl-L-methionine = 2-methyladenosine(37) in tRNA + 5'-deoxyadenosine + L-methionine + 2 oxidized [2Fe-2S]-[ferredoxin] + S-adenosyl-L-homocysteine. In terms of biological role, specifically methylates position 2 of adenine 2503 in 23S rRNA and position 2 of adenine 37 in tRNAs. m2A2503 modification seems to play a crucial role in the proofreading step occurring at the peptidyl transferase center and thus would serve to optimize ribosomal fidelity. This is Dual-specificity RNA methyltransferase RlmN from Colwellia psychrerythraea (strain 34H / ATCC BAA-681) (Vibrio psychroerythus).